The chain runs to 234 residues: Glutathione S-transferase U11 (234 aa).

Residues 11-90 form the GST N-terminal domain; that stretch reads EYVKLLGAWP…YVDETWLSGP (80 aa). Residues 21–22, 47–48, 61–62, and 74–75 contribute to the glutathione site; these read SP, LS, QI, and ES. Residues 96-228 form the GST C-terminal domain; that stretch reads DPFDRAVARF…KLVQFARLKF (133 aa).

It belongs to the GST superfamily. Tau family.

It is found in the cytoplasm. The protein resides in the cytosol. The enzyme catalyses RX + glutathione = an S-substituted glutathione + a halide anion + H(+). Its function is as follows. May be involved in the conjugation of reduced glutathione to a wide number of exogenous and endogenous hydrophobic electrophiles and have a detoxification role against certain herbicides. The chain is Glutathione S-transferase U11 (GSTU11) from Arabidopsis thaliana (Mouse-ear cress).